Consider the following 333-residue polypeptide: Leucine carboxyl methyltransferase 1 (333 aa).

S-adenosyl-L-methionine-binding positions include lysine 42, arginine 82, glycine 107, aspartate 131, 181-182 (DL), and glutamate 208.

It belongs to the methyltransferase superfamily. LCMT family.

The catalysed reaction is [phosphatase 2A protein]-C-terminal L-leucine + S-adenosyl-L-methionine = [phosphatase 2A protein]-C-terminal L-leucine methyl ester + S-adenosyl-L-homocysteine. Its function is as follows. Methylates the carboxyl group of the C-terminal leucine residue of protein phosphatase 2A catalytic subunits to form alpha-leucine ester residues. This is Leucine carboxyl methyltransferase 1 from Caenorhabditis elegans.